The following is a 382-amino-acid chain: Alkanesulfonate monooxygenase (382 aa).

It belongs to the SsuD family. In terms of assembly, homotetramer.

It catalyses the reaction an alkanesulfonate + FMNH2 + O2 = an aldehyde + FMN + sulfite + H2O + 2 H(+). Its function is as follows. Catalyzes the desulfonation of aliphatic sulfonates. The protein is Alkanesulfonate monooxygenase of Yersinia pseudotuberculosis serotype O:1b (strain IP 31758).